A 358-amino-acid polypeptide reads, in one-letter code: PDZ and LIM domain protein 3 (358 aa).

Positions 1–84 constitute a PDZ domain; the sequence is MPQNVLLPGP…QLCLKIDRAE (84 aa). 2 disordered regions span residues 126-155 and 237-274; these read FILPGRSSGSSTPSGFDPGSGRSTPSSVST and DTEHPSKPRQSGSFKILQDMVDDDPDRPSGTRSVRAPV. Residues 129 to 146 show a composition bias toward low complexity; it reads PGRSSGSSTPSGFDPGSG. In terms of domain architecture, LIM zinc-binding spans 288–347; that stretch reads PICDRCGNGIVGTVVKAKDKLRHPDCFVCSDCNLNLKQKGYFFVEGQLYCEAHARARMRP.

The protein localises to the cytoplasm. The protein resides in the myofibril. It localises to the sarcomere. Its subcellular location is the z line. May play a role in the organization of actin filament arrays within muscle cells. This chain is PDZ and LIM domain protein 3 (pdlim3), found in Xenopus laevis (African clawed frog).